A 437-amino-acid chain; its full sequence is Interactor protein for cytohesin exchange factors 1 (437 aa).

The PH domain occupies 41–140 (HADCQGWLYK…WLNKLGSAVI (100 aa)). 2 disordered regions span residues 143–225 (ESTT…PDTV) and 273–307 (LSSDDTSSLSSNHDHLTVPDKPAGSKIMDKEETKV). Positions 151-162 (CYSESEQEDPEI) are enriched in acidic residues. Positions 172 to 200 (ASQTQSLTAQQASSSSPSLSGTSYSFSSL) are enriched in low complexity. Polar residues predominate over residues 201–214 (ENTVKTPSSFPSSL). Positions 273–283 (LSSDDTSSLSS) are enriched in low complexity. 2 CRAC domain regions span residues 315-320 (KLYKSL) and 339-348 (LRKSFVKRCK). The tract at residues 389–437 (KYREWKVMNTLLIQDIYQQQRASPAPDDTDDTPQELKKSPSSPSVENSI) is required for interaction with CYTH2. The segment at 406–437 (QQQRASPAPDDTDDTPQELKKSPSSPSVENSI) is disordered. Ser-411 carries the post-translational modification Phosphoserine. Residues 427 to 437 (SPSSPSVENSI) show a composition bias toward polar residues.

In terms of assembly, interacts with guanine-nucleotide exchange factors PSCD1, PSCD2, PSCD3 and PSCD4. Interacts (via C-terminus) with cytohesin-2 CYTH2.

The protein localises to the cytoplasm. It localises to the cell membrane. Functionally, enhances the promotion of guanine-nucleotide exchange by PSCD2 on ARF6 in a concentration-dependent manner. This chain is Interactor protein for cytohesin exchange factors 1 (IPCEF1), found in Homo sapiens (Human).